Consider the following 232-residue polypeptide: Enolase-phosphatase E1 (232 aa).

The protein belongs to the HAD-like hydrolase superfamily. MasA/MtnC family. In terms of assembly, monomer. Mg(2+) serves as cofactor.

It catalyses the reaction 5-methylsulfanyl-2,3-dioxopentyl phosphate + H2O = 1,2-dihydroxy-5-(methylsulfanyl)pent-1-en-3-one + phosphate. It participates in amino-acid biosynthesis; L-methionine biosynthesis via salvage pathway; L-methionine from S-methyl-5-thio-alpha-D-ribose 1-phosphate: step 3/6. It functions in the pathway amino-acid biosynthesis; L-methionine biosynthesis via salvage pathway; L-methionine from S-methyl-5-thio-alpha-D-ribose 1-phosphate: step 4/6. In terms of biological role, bifunctional enzyme that catalyzes the enolization of 2,3-diketo-5-methylthiopentyl-1-phosphate (DK-MTP-1-P) into the intermediate 2-hydroxy-3-keto-5-methylthiopentenyl-1-phosphate (HK-MTPenyl-1-P), which is then dephosphorylated to form the acireductone 1,2-dihydroxy-3-keto-5-methylthiopentene (DHK-MTPene). The protein is Enolase-phosphatase E1 of Acidiphilium cryptum (strain JF-5).